A 112-amino-acid polypeptide reads, in one-letter code: Large ribosomal subunit protein uL22 (112 aa).

The protein belongs to the universal ribosomal protein uL22 family. As to quaternary structure, part of the 50S ribosomal subunit.

In terms of biological role, this protein binds specifically to 23S rRNA; its binding is stimulated by other ribosomal proteins, e.g. L4, L17, and L20. It is important during the early stages of 50S assembly. It makes multiple contacts with different domains of the 23S rRNA in the assembled 50S subunit and ribosome. Its function is as follows. The globular domain of the protein is located near the polypeptide exit tunnel on the outside of the subunit, while an extended beta-hairpin is found that lines the wall of the exit tunnel in the center of the 70S ribosome. The sequence is that of Large ribosomal subunit protein uL22 from Sulfurovum sp. (strain NBC37-1).